The primary structure comprises 143 residues: NADH-quinone oxidoreductase subunit A (143 aa).

Transmembrane regions (helical) follow at residues 8–28 (FGNV…GYLT), 63–83 (FYVV…LFPW), and 93–113 (FALV…VYAW).

It belongs to the complex I subunit 3 family. NDH-1 is composed of 14 different subunits. Subunits NuoA, H, J, K, L, M, N constitute the membrane sector of the complex.

It localises to the cell inner membrane. It catalyses the reaction a quinone + NADH + 5 H(+)(in) = a quinol + NAD(+) + 4 H(+)(out). In terms of biological role, NDH-1 shuttles electrons from NADH, via FMN and iron-sulfur (Fe-S) centers, to quinones in the respiratory chain. The immediate electron acceptor for the enzyme in this species is believed to be a menaquinone. Couples the redox reaction to proton translocation (for every two electrons transferred, four hydrogen ions are translocated across the cytoplasmic membrane), and thus conserves the redox energy in a proton gradient. In Chlorobium phaeovibrioides (strain DSM 265 / 1930) (Prosthecochloris vibrioformis (strain DSM 265)), this protein is NADH-quinone oxidoreductase subunit A.